A 477-amino-acid chain; its full sequence is Glycogen synthase (477 aa).

Lys15 provides a ligand contact to ADP-alpha-D-glucose.

This sequence belongs to the glycosyltransferase 1 family. Bacterial/plant glycogen synthase subfamily.

It catalyses the reaction [(1-&gt;4)-alpha-D-glucosyl](n) + ADP-alpha-D-glucose = [(1-&gt;4)-alpha-D-glucosyl](n+1) + ADP + H(+). The protein operates within glycan biosynthesis; glycogen biosynthesis. Synthesizes alpha-1,4-glucan chains using ADP-glucose. The protein is Glycogen synthase of Cronobacter sakazakii (strain ATCC BAA-894) (Enterobacter sakazakii).